Reading from the N-terminus, the 265-residue chain is Capsule polysaccharide export inner-membrane protein BexB (265 aa).

A run of 6 helical transmembrane segments spans residues 37–57, 64–84, 118–138, 151–171, 178–198, and 235–255; these read IGFF…VMMW, KFST…AMMW, LLEV…LVMI, LIAW…ICAI, FGKI…AFFF, and ESIG…LVMV. An ABC transmembrane type-2 domain is found at 37–258; it reads IGFFWLFVEP…LLGLVMVKNF (222 aa).

It belongs to the ABC-2 integral membrane protein family.

Its subcellular location is the cell inner membrane. May form an ATP-driven capsule polysaccharide export apparatus, in association with the BexA, BexC and BexD proteins. This chain is Capsule polysaccharide export inner-membrane protein BexB (bexB), found in Haemophilus influenzae.